The chain runs to 187 residues: dCTP deaminase, dUMP-forming (187 aa).

DCTP is bound by residues 101–106 (KSSLGR) and Asp-119. Catalysis depends on Glu-129, which acts as the Proton donor/acceptor. DCTP contacts are provided by Gln-148, Tyr-162, and Gln-174.

Belongs to the dCTP deaminase family. As to quaternary structure, homotrimer.

It carries out the reaction dCTP + 2 H2O = dUMP + NH4(+) + diphosphate. The protein operates within pyrimidine metabolism; dUMP biosynthesis; dUMP from dCTP: step 1/1. Functionally, bifunctional enzyme that catalyzes both the deamination of dCTP to dUTP and the hydrolysis of dUTP to dUMP without releasing the toxic dUTP intermediate. In Corynebacterium kroppenstedtii (strain DSM 44385 / JCM 11950 / CIP 105744 / CCUG 35717), this protein is dCTP deaminase, dUMP-forming.